Reading from the N-terminus, the 360-residue chain is Phospho-N-acetylmuramoyl-pentapeptide-transferase (360 aa).

10 helical membrane-spanning segments follow: residues 27–47 (IVSL…LIAW), 72–92 (PTMG…MWAY), 94–114 (SNPY…VGFI), 132–152 (WKYF…YSIG), 168–188 (IMPQ…VGTS), 199–219 (GLAI…AWAT), 236–256 (AGEL…FLWF), 263–283 (VFMG…IAVL), 288–308 (FLLV…ILQV), and 338–358 (VIVR…ATLK).

It belongs to the glycosyltransferase 4 family. MraY subfamily. Mg(2+) serves as cofactor.

It is found in the cell inner membrane. The catalysed reaction is UDP-N-acetyl-alpha-D-muramoyl-L-alanyl-gamma-D-glutamyl-meso-2,6-diaminopimeloyl-D-alanyl-D-alanine + di-trans,octa-cis-undecaprenyl phosphate = di-trans,octa-cis-undecaprenyl diphospho-N-acetyl-alpha-D-muramoyl-L-alanyl-D-glutamyl-meso-2,6-diaminopimeloyl-D-alanyl-D-alanine + UMP. Its pathway is cell wall biogenesis; peptidoglycan biosynthesis. In terms of biological role, catalyzes the initial step of the lipid cycle reactions in the biosynthesis of the cell wall peptidoglycan: transfers peptidoglycan precursor phospho-MurNAc-pentapeptide from UDP-MurNAc-pentapeptide onto the lipid carrier undecaprenyl phosphate, yielding undecaprenyl-pyrophosphoryl-MurNAc-pentapeptide, known as lipid I. In Yersinia pestis bv. Antiqua (strain Angola), this protein is Phospho-N-acetylmuramoyl-pentapeptide-transferase.